The primary structure comprises 308 residues: MSEKLVEIKDLEISFGEGSKKFVAVKNANFFINKGETFSLVGESGSGKTTIGRAIIGLNDTSNGDIIFDGQKINGKKSREQAAELIRRIQMIFQDPAASLNERATVDYIISEGLYNHRLFKDEEERKEKVQNIIREVGLLAEHLTRYPHEFSGGQRQRIGIARALVMQPDFVIADEPISALDVSVRAQVLNLLKKFQKELGLTYLFIAHDLSVVRFISDRIAVIYKGVIVEVAETEELFNNPIHPYTQALLSAVPIPDPILERKKVLKVYDPSQHDYETDKPSMVEIRPGHYVWANQAELARYQKGLN.

The region spanning 6–251 (VEIKDLEISF…PIHPYTQALL (246 aa)) is the ABC transporter domain. Position 42–49 (42–49 (GESGSGKT)) interacts with ATP.

This sequence belongs to the ABC transporter superfamily.

The protein resides in the cell membrane. Part of the binding-protein-dependent transport system for oligopeptides. Probably responsible for energy coupling to the transport system. This Streptococcus pneumoniae serotype 4 (strain ATCC BAA-334 / TIGR4) protein is Oligopeptide transport ATP-binding protein AmiF (amiF).